Consider the following 225-residue polypeptide: Urease accessory protein UreF (225 aa).

It belongs to the UreF family. As to quaternary structure, ureD, UreF and UreG form a complex that acts as a GTP-hydrolysis-dependent molecular chaperone, activating the urease apoprotein by helping to assemble the nickel containing metallocenter of UreC. The UreE protein probably delivers the nickel.

The protein localises to the cytoplasm. Functionally, required for maturation of urease via the functional incorporation of the urease nickel metallocenter. The sequence is that of Urease accessory protein UreF from Geobacillus kaustophilus (strain HTA426).